We begin with the raw amino-acid sequence, 20 residues long: Collagenolytic protease 35 kDa 2 (20 aa).

The Peptidase S1 domain maps to Ile-1–Asp-20. The tract at residues Ile-1–Asp-20 is disordered.

Belongs to the peptidase S1 family.

The catalysed reaction is Hydrolysis of proteins, with broad specificity for peptide bonds. Native collagen is cleaved about 75% of the length of the molecule from the N-terminus. Low activity on small molecule substrates of both trypsin and chymotrypsin.. This enzyme is a serine protease capable of degrading the native triple helix of collagen. In Chionoecetes opilio (Atlantic snow crab), this protein is Collagenolytic protease 35 kDa 2.